An 87-amino-acid polypeptide reads, in one-letter code: Small ribosomal subunit protein uS17 (87 aa).

Belongs to the universal ribosomal protein uS17 family. In terms of assembly, part of the 30S ribosomal subunit.

Its function is as follows. One of the primary rRNA binding proteins, it binds specifically to the 5'-end of 16S ribosomal RNA. The sequence is that of Small ribosomal subunit protein uS17 from Bacillus velezensis (strain DSM 23117 / BGSC 10A6 / LMG 26770 / FZB42) (Bacillus amyloliquefaciens subsp. plantarum).